Reading from the N-terminus, the 257-residue chain is 1-(5-phosphoribosyl)-5-[(5-phosphoribosylamino)methylideneamino] imidazole-4-carboxamide isomerase (257 aa).

Residue Asp8 is the Proton acceptor of the active site. Asp129 (proton donor) is an active-site residue.

Belongs to the HisA/HisF family.

The protein localises to the cytoplasm. The catalysed reaction is 1-(5-phospho-beta-D-ribosyl)-5-[(5-phospho-beta-D-ribosylamino)methylideneamino]imidazole-4-carboxamide = 5-[(5-phospho-1-deoxy-D-ribulos-1-ylimino)methylamino]-1-(5-phospho-beta-D-ribosyl)imidazole-4-carboxamide. It participates in amino-acid biosynthesis; L-histidine biosynthesis; L-histidine from 5-phospho-alpha-D-ribose 1-diphosphate: step 4/9. The polypeptide is 1-(5-phosphoribosyl)-5-[(5-phosphoribosylamino)methylideneamino] imidazole-4-carboxamide isomerase (Thermosynechococcus vestitus (strain NIES-2133 / IAM M-273 / BP-1)).